Reading from the N-terminus, the 410-residue chain is Aspartate aminotransferase (410 aa).

Glycine 47, tryptophan 135, and asparagine 185 together coordinate L-aspartate. Lysine 249 bears the N6-(pyridoxal phosphate)lysine mark. Arginine 385 provides a ligand contact to L-aspartate.

It belongs to the class-I pyridoxal-phosphate-dependent aminotransferase family. As to quaternary structure, homodimer. The cofactor is pyridoxal 5'-phosphate.

The protein localises to the cytoplasm. It catalyses the reaction L-aspartate + 2-oxoglutarate = oxaloacetate + L-glutamate. It carries out the reaction L-2-aminoadipate + 2-oxoglutarate = 2-oxoadipate + L-glutamate. In terms of biological role, catalyzes the reversible conversion of aspartate and 2-oxoglutarate to glutamate and oxaloacetate. Genetic evidence shows that this protein is involved in L-lysine catabolism. It may have 2-aminoadipate:2-oxoglutarate aminotransferase activity. The polypeptide is Aspartate aminotransferase (aatB) (Rhizobium meliloti (strain 1021) (Ensifer meliloti)).